A 429-amino-acid polypeptide reads, in one-letter code: MANVVVVGSQWGDEGKGKIVDWLSERADVIVRYQGGHNAGHTLVIDGVSYKLSLLPSGLVRGKLSVIGNGVVVDPHHFVAEVEKLRGQGIDVTPDVLRVAENAPLILSIHRELDAMREGSNSGLKIGTTKRGIGPAYEDKVGRRAIRVIDLTEPETLRPKVERLLAHHNSLRRGMGLEEIAVETILTELTSVADQILPYIDQVWRVLDERRKAGARILFEGAQGALLDNDHGTYPFVTSSNTVAGQAAAGSGLGPTAIGYVLGITKAYTTRVGEGPFPTELNDEIGEFLGTKGHEFGVVTGRKRRCGWFDAVIVRQTVRTSGINGIALTKLDVLDGLEEIKICVAYELDGKRIDYLPSSMGAQARVKPIYETLPGWSETTAGARSWNDLPAQTVKYVRHIEELIGAPVAMLSTSPEREDTILVTDPFHD.

Residues 12–18 (GDEGKGK) and 40–42 (GHT) each bind GTP. The Proton acceptor role is filled by Asp13. Residues Asp13 and Gly40 each coordinate Mg(2+). IMP is bound by residues 13 to 16 (DEGK), 38 to 41 (NAGH), Thr129, Arg143, Gln223, Thr238, and Arg302. His41 serves as the catalytic Proton donor. 298-304 (VVTGRKR) is a binding site for substrate. Residues Arg304, 330 to 332 (KLD), and 412 to 414 (STS) each bind GTP.

This sequence belongs to the adenylosuccinate synthetase family. As to quaternary structure, homodimer. It depends on Mg(2+) as a cofactor.

It localises to the cytoplasm. The catalysed reaction is IMP + L-aspartate + GTP = N(6)-(1,2-dicarboxyethyl)-AMP + GDP + phosphate + 2 H(+). It participates in purine metabolism; AMP biosynthesis via de novo pathway; AMP from IMP: step 1/2. In terms of biological role, plays an important role in the de novo pathway of purine nucleotide biosynthesis. Catalyzes the first committed step in the biosynthesis of AMP from IMP. This chain is Adenylosuccinate synthetase, found in Brucella suis (strain ATCC 23445 / NCTC 10510).